Consider the following 140-residue polypeptide: Large ribosomal subunit protein uL14 (140 aa).

Belongs to the universal ribosomal protein uL14 family.

This Aedes aegypti (Yellowfever mosquito) protein is Large ribosomal subunit protein uL14 (RpL23-A).